We begin with the raw amino-acid sequence, 539 residues long: Beta-apo-4'-carotenal oxygenase (539 aa).

Active-site residues include Glu228 and Cys262.

It belongs to the aldehyde dehydrogenase family.

It carries out the reaction 4'-apo-beta-carotenal + NAD(+) + H2O = neurosporaxanthin + NADH + 2 H(+). Beta-apo-4'-carotenal oxygenase involved in the last step of synthesis of neurosporaxanthin, a carboxylic apocarotenoid acting as an essential protective pigments and leading to orange pigmentation. Converts the aldehyde beta-apo-4'-carotenal into neurosporaxanthin. Is also able to use shorter apocarotenals as substrates (such as beta-apo-8'-carotenal (C30), beta-apo-10'-carotenal (C27), or the acyclic apocarotenal apo-8'-lycopenal (C30)), indicating wide substrate specificity. Neurosporaxanthin is synthesized from geranyl-geranyl pyrophosphate (GGPP) through several enzymatic activities. Phytoene synthase activity performed by the bifunctional enzyme carAR first produces phytoene from geranyl-geranyl pyrophosphate (GGPP). The phytoene dehydrogenase carB then introduces 4 desaturations to lead to lycopene which is substrate of the carotene cyclase activity of carAR that leads to the production of gamma-carotene. CarB then performs a 5th desaturation reaction to yield torulene. Torulene is the substrate of the dioxidase carT that breaks the molecule, removing five carbon atoms to yield beta-apo-4'-carotenal, whereas the aldehyde dehydrogenase carD mediates the last step by converting beta-apo-4'-carotenal into neurosporaxanthin. In Gibberella fujikuroi (strain CBS 195.34 / IMI 58289 / NRRL A-6831) (Bakanae and foot rot disease fungus), this protein is Beta-apo-4'-carotenal oxygenase.